A 441-amino-acid polypeptide reads, in one-letter code: UDP-N-acetylglucosamine--peptide N-acetylglucosaminyltransferase stabilizing protein GtfB (441 aa).

The protein belongs to the GtfB family. In terms of assembly, forms a heterotetramer with 2 subunits each of GtfA and GtfB. Part of the accessory SecA2/SecY2 protein translocation apparatus.

It localises to the cell membrane. Its pathway is protein modification; protein glycosylation. In terms of biological role, required for polymorphic O-glycosylation of the serine-rich repeat protein (SRRP) in this bacteria. A stabilizing protein that is part of the accessory SecA2/SecY2 system specifically required to export serine-rich repeat cell wall proteins encoded in the same operon. The GtfA-GtfB complex adds GlcNAc from UDP-GlcNAc to the substrate protein, attaching the first sugar residue. Stabilizes the glycosylation activity of GtfA. Has no N-acetylglucosaminyl transferase activity on its own. This Limosilactobacillus reuteri subsp. suis (strain ATCC 53608 / LMG 31752 / 1063) (Lactobacillus reuteri) protein is UDP-N-acetylglucosamine--peptide N-acetylglucosaminyltransferase stabilizing protein GtfB.